A 539-amino-acid chain; its full sequence is AT-rich interactive domain-containing protein 3A (539 aa).

The disordered stretch occupies residues methionine 1–aspartate 190. The segment covering leucine 55–alanine 73 has biased composition (low complexity). Residues serine 84 to lysine 100 are compositionally biased toward acidic residues. Residues glutamate 101 to glutamine 110 are compositionally biased toward basic and acidic residues. Over residues alanine 113–glutamate 141 the composition is skewed to acidic residues. Positions histidine 161–glutamine 173 are enriched in polar residues. One can recognise an ARID domain in the interval aspartate 209 to arginine 301. Residues alanine 404–serine 499 enclose the REKLES domain. The tract at residues alanine 405–glutamine 448 is important for nuclear localization. The homodimerization stretch occupies residues proline 450 to threonine 471. Residues glutamine 495–glycine 502 form an important for cytoplasmic localization region. The span at proline 497–glycine 512 shows a compositional bias: polar residues. The segment at proline 497–proline 539 is disordered. The span at serine 519–proline 539 shows a compositional bias: low complexity.

As to quaternary structure, homodimer.

It is found in the nucleus. It localises to the cytoplasm. In terms of biological role, transcription factor required for smad1 and smad2-mediated responses to TGFbeta during mesoderm induction. The sequence is that of AT-rich interactive domain-containing protein 3A (arid3a) from Xenopus laevis (African clawed frog).